Reading from the N-terminus, the 157-residue chain is 6,7-dimethyl-8-ribityllumazine synthase 1 (157 aa).

Residues Phe-22, 53-55 (ALE), and 82-84 (TVI) contribute to the 5-amino-6-(D-ribitylamino)uracil site. Residue 87–88 (ET) coordinates (2S)-2-hydroxy-3-oxobutyl phosphate. His-90 serves as the catalytic Proton donor. Residue Asn-115 participates in 5-amino-6-(D-ribitylamino)uracil binding. Arg-129 provides a ligand contact to (2S)-2-hydroxy-3-oxobutyl phosphate.

It belongs to the DMRL synthase family.

It catalyses the reaction (2S)-2-hydroxy-3-oxobutyl phosphate + 5-amino-6-(D-ribitylamino)uracil = 6,7-dimethyl-8-(1-D-ribityl)lumazine + phosphate + 2 H2O + H(+). The protein operates within cofactor biosynthesis; riboflavin biosynthesis; riboflavin from 2-hydroxy-3-oxobutyl phosphate and 5-amino-6-(D-ribitylamino)uracil: step 1/2. Its function is as follows. Catalyzes the formation of 6,7-dimethyl-8-ribityllumazine by condensation of 5-amino-6-(D-ribitylamino)uracil with 3,4-dihydroxy-2-butanone 4-phosphate. This is the penultimate step in the biosynthesis of riboflavin. This is 6,7-dimethyl-8-ribityllumazine synthase 1 from Brucella suis biovar 1 (strain 1330).